The chain runs to 156 residues: uncharacterized protein (156 aa).

3 consecutive transmembrane segments (helical) span residues 21–41 (GVLF…AISL), 54–74 (TICS…IDFA), and 80–100 (SVLV…WALF).

It localises to the membrane. This is an uncharacterized protein from Saccharomyces cerevisiae (strain ATCC 204508 / S288c) (Baker's yeast).